The chain runs to 308 residues: Elongation factor Ts (308 aa).

Residues 80-83 (TDFV) are involved in Mg(2+) ion dislocation from EF-Tu.

It belongs to the EF-Ts family.

The protein localises to the cytoplasm. Functionally, associates with the EF-Tu.GDP complex and induces the exchange of GDP to GTP. It remains bound to the aminoacyl-tRNA.EF-Tu.GTP complex up to the GTP hydrolysis stage on the ribosome. This is Elongation factor Ts from Erythrobacter litoralis (strain HTCC2594).